The chain runs to 171 residues: Adenine phosphoribosyltransferase (171 aa).

Belongs to the purine/pyrimidine phosphoribosyltransferase family. As to quaternary structure, homodimer.

The protein localises to the cytoplasm. It carries out the reaction AMP + diphosphate = 5-phospho-alpha-D-ribose 1-diphosphate + adenine. The protein operates within purine metabolism; AMP biosynthesis via salvage pathway; AMP from adenine: step 1/1. In terms of biological role, catalyzes a salvage reaction resulting in the formation of AMP, that is energically less costly than de novo synthesis. In Ruminiclostridium cellulolyticum (strain ATCC 35319 / DSM 5812 / JCM 6584 / H10) (Clostridium cellulolyticum), this protein is Adenine phosphoribosyltransferase.